An 840-amino-acid polypeptide reads, in one-letter code: Probable alpha-glucuronidase A (840 aa).

An N-terminal signal peptide occupies residues 1-19; that stretch reads MWSGIPVFALLSSIGIAAA. Residues asparagine 50, asparagine 149, asparagine 222, asparagine 262, asparagine 279, asparagine 310, asparagine 465, asparagine 527, asparagine 576, asparagine 610, asparagine 682, asparagine 723, and asparagine 732 are each glycosylated (N-linked (GlcNAc...) asparagine).

It belongs to the glycosyl hydrolase 67 family.

The protein resides in the secreted. It carries out the reaction an alpha-D-glucuronoside + H2O = D-glucuronate + an alcohol. Its function is as follows. Alpha-glucuronidase involved in the hydrolysis of xylan, a major structural heterogeneous polysaccharide found in plant biomass representing the second most abundant polysaccharide in the biosphere, after cellulose. Releases 4-O-methylglucuronic acid from xylan. The sequence is that of Probable alpha-glucuronidase A (aguA) from Neosartorya fischeri (strain ATCC 1020 / DSM 3700 / CBS 544.65 / FGSC A1164 / JCM 1740 / NRRL 181 / WB 181) (Aspergillus fischerianus).